The primary structure comprises 368 residues: Phospho-N-acetylmuramoyl-pentapeptide-transferase (368 aa).

The next 9 helical transmembrane spans lie at 30-50, 72-92, 98-118, 139-159, 170-190, 201-221, 238-258, 262-284, and 345-365; these read AAAI…IRFL, VPTM…LLWA, HVWL…IDDY, VALG…SVLL, FSVD…TAVS, GLAA…AYLG, AGEI…FLWF, PAEV…VIAL, and KIVI…LMTL.

The protein belongs to the glycosyltransferase 4 family. MraY subfamily. Requires Mg(2+) as cofactor.

The protein localises to the cell inner membrane. The catalysed reaction is UDP-N-acetyl-alpha-D-muramoyl-L-alanyl-gamma-D-glutamyl-meso-2,6-diaminopimeloyl-D-alanyl-D-alanine + di-trans,octa-cis-undecaprenyl phosphate = di-trans,octa-cis-undecaprenyl diphospho-N-acetyl-alpha-D-muramoyl-L-alanyl-D-glutamyl-meso-2,6-diaminopimeloyl-D-alanyl-D-alanine + UMP. The protein operates within cell wall biogenesis; peptidoglycan biosynthesis. In terms of biological role, catalyzes the initial step of the lipid cycle reactions in the biosynthesis of the cell wall peptidoglycan: transfers peptidoglycan precursor phospho-MurNAc-pentapeptide from UDP-MurNAc-pentapeptide onto the lipid carrier undecaprenyl phosphate, yielding undecaprenyl-pyrophosphoryl-MurNAc-pentapeptide, known as lipid I. This chain is Phospho-N-acetylmuramoyl-pentapeptide-transferase, found in Chlorobaculum parvum (strain DSM 263 / NCIMB 8327) (Chlorobium vibrioforme subsp. thiosulfatophilum).